A 280-amino-acid chain; its full sequence is Ribosomal RNA-processing protein 7 homolog A (280 aa).

The RRM domain occupies 59-159 (RTLFVLNVPP…TGIHKWISDY (101 aa)). Serine 99 is modified (phosphoserine).

It belongs to the RRP7 family. In terms of assembly, part of the small subunit (SSU) processome, composed of more than 70 proteins and the RNA chaperone small nucleolar RNA (snoRNA) U3. Interacts with NOL6; required for NOL6 localization to nucleolus.

The protein resides in the nucleus. It localises to the nucleolus. The protein localises to the cell projection. It is found in the cilium. Its subcellular location is the cytoplasm. The protein resides in the cytoskeleton. It localises to the microtubule organizing center. The protein localises to the centrosome. Nucleolar protein that is involved in ribosomal RNA (rRNA) processing. Also plays a role in primary cilia resorption, and cell cycle progression in neurogenesis and neocortex development. Part of the small subunit (SSU) processome, first precursor of the small eukaryotic ribosomal subunit. During the assembly of the SSU processome in the nucleolus, many ribosome biogenesis factors, an RNA chaperone and ribosomal proteins associate with the nascent pre-rRNA and work in concert to generate RNA folding, modifications, rearrangements and cleavage as well as targeted degradation of pre-ribosomal RNA by the RNA exosome. The sequence is that of Ribosomal RNA-processing protein 7 homolog A (RRP7A) from Pongo abelii (Sumatran orangutan).